Consider the following 311-residue polypeptide: Large ribosomal subunit protein uL22 (311 aa).

This sequence belongs to the universal ribosomal protein uL22 family. In terms of assembly, part of the 50S ribosomal subunit.

This protein binds specifically to 23S rRNA; its binding is stimulated by other ribosomal proteins, e.g. L4, L17, and L20. It is important during the early stages of 50S assembly. It makes multiple contacts with different domains of the 23S rRNA in the assembled 50S subunit and ribosome. Functionally, the globular domain of the protein is located near the polypeptide exit tunnel on the outside of the subunit, while an extended beta-hairpin is found that lines the wall of the exit tunnel in the center of the 70S ribosome. This Ureaplasma parvum serovar 3 (strain ATCC 27815 / 27 / NCTC 11736) protein is Large ribosomal subunit protein uL22 (rplV).